The chain runs to 557 residues: Dihydroxy-acid dehydratase (557 aa).

Asp-78 lines the Mg(2+) pocket. Cys-119 serves as a coordination point for [2Fe-2S] cluster. Asp-120 and Lys-121 together coordinate Mg(2+). Lys-121 carries the N6-carboxylysine modification. Position 192 (Cys-192) interacts with [2Fe-2S] cluster. Residue Glu-442 participates in Mg(2+) binding. The active-site Proton acceptor is Ser-468.

Belongs to the IlvD/Edd family. As to quaternary structure, homodimer. It depends on [2Fe-2S] cluster as a cofactor. The cofactor is Mg(2+).

It carries out the reaction (2R)-2,3-dihydroxy-3-methylbutanoate = 3-methyl-2-oxobutanoate + H2O. The catalysed reaction is (2R,3R)-2,3-dihydroxy-3-methylpentanoate = (S)-3-methyl-2-oxopentanoate + H2O. It functions in the pathway amino-acid biosynthesis; L-isoleucine biosynthesis; L-isoleucine from 2-oxobutanoate: step 3/4. It participates in amino-acid biosynthesis; L-valine biosynthesis; L-valine from pyruvate: step 3/4. Functionally, functions in the biosynthesis of branched-chain amino acids. Catalyzes the dehydration of (2R,3R)-2,3-dihydroxy-3-methylpentanoate (2,3-dihydroxy-3-methylvalerate) into 2-oxo-3-methylpentanoate (2-oxo-3-methylvalerate) and of (2R)-2,3-dihydroxy-3-methylbutanoate (2,3-dihydroxyisovalerate) into 2-oxo-3-methylbutanoate (2-oxoisovalerate), the penultimate precursor to L-isoleucine and L-valine, respectively. This is Dihydroxy-acid dehydratase from Bacillus cereus (strain Q1).